We begin with the raw amino-acid sequence, 586 residues long: Phosphomethylpyrimidine synthase (586 aa).

Residues 1–58 (MKQSVSAEQIELKSSLPGSKKVYVDGPREGMKVPMREIEQSDTNGVPNPPIRVYDTSG) are disordered. Basic and acidic residues predominate over residues 22–39 (VYVDGPREGMKVPMREIE). Substrate contacts are provided by residues Asn193, Met222, Tyr251, His287, 307–309 (SRG), 348–351 (DGLR), and Glu387. His391 is a binding site for Zn(2+). Residue Tyr414 participates in substrate binding. His455 lines the Zn(2+) pocket. Residues Cys535, Cys538, and Cys543 each coordinate [4Fe-4S] cluster.

This sequence belongs to the ThiC family. Requires [4Fe-4S] cluster as cofactor.

It carries out the reaction 5-amino-1-(5-phospho-beta-D-ribosyl)imidazole + S-adenosyl-L-methionine = 4-amino-2-methyl-5-(phosphooxymethyl)pyrimidine + CO + 5'-deoxyadenosine + formate + L-methionine + 3 H(+). The protein operates within cofactor biosynthesis; thiamine diphosphate biosynthesis. Its function is as follows. Catalyzes the synthesis of the hydroxymethylpyrimidine phosphate (HMP-P) moiety of thiamine from aminoimidazole ribotide (AIR) in a radical S-adenosyl-L-methionine (SAM)-dependent reaction. The polypeptide is Phosphomethylpyrimidine synthase (Bacillus thuringiensis (strain Al Hakam)).